The chain runs to 186 residues: Lipid A acyltransferase PagP (186 aa).

The N-terminal stretch at 1–25 (MNVSKYVAIFSFVFIQLISVGKVFA) is a signal peptide. Catalysis depends on residues His-58, Asp-101, and Ser-102.

Belongs to the lipid A palmitoyltransferase family. In terms of assembly, homodimer.

It localises to the cell outer membrane. The enzyme catalyses a lipid A + a 1,2-diacyl-sn-glycero-3-phosphocholine = a hepta-acyl lipid A + a 2-acyl-sn-glycero-3-phosphocholine. It carries out the reaction a lipid IVA + a 1,2-diacyl-sn-glycero-3-phosphocholine = a lipid IVB + a 2-acyl-sn-glycero-3-phosphocholine. It catalyses the reaction a lipid IIA + a 1,2-diacyl-sn-glycero-3-phosphocholine = a lipid IIB + a 2-acyl-sn-glycero-3-phosphocholine. Transfers a fatty acid residue from the sn-1 position of a phospholipid to the N-linked hydroxyfatty acid chain on the proximal unit of lipid A or its precursors. This Shigella flexneri serotype X (strain 2002017) protein is Lipid A acyltransferase PagP.